Reading from the N-terminus, the 74-residue chain is Mitochondrial import receptor subunit TOM6 homolog (74 aa).

Polar residues predominate over residues 1–16 (MASSTVPVSAAGSANE). A disordered region spans residues 1–22 (MASSTVPVSAAGSANETPEIPD). A2 carries the N-acetylalanine modification.

The protein belongs to the Tom6 family. As to quaternary structure, forms part of the preprotein translocase complex of the outer mitochondrial membrane (TOM complex) which consists of at least 7 different proteins (TOMM5, TOMM6, TOMM7, TOMM20, TOMM22, TOMM40 and TOMM70).

The protein localises to the mitochondrion outer membrane. The sequence is that of Mitochondrial import receptor subunit TOM6 homolog (TOMM6) from Homo sapiens (Human).